A 418-amino-acid polypeptide reads, in one-letter code: tRNA(Met) cytidine acetate ligase (418 aa).

ATP is bound by residues Gly-95, Asn-161, and Arg-186.

The protein belongs to the TmcAL family.

The protein resides in the cytoplasm. The catalysed reaction is cytidine(34) in elongator tRNA(Met) + acetate + ATP = N(4)-acetylcytidine(34) in elongator tRNA(Met) + AMP + diphosphate. Its function is as follows. Catalyzes the formation of N(4)-acetylcytidine (ac(4)C) at the wobble position of elongator tRNA(Met), using acetate and ATP as substrates. First activates an acetate ion to form acetyladenylate (Ac-AMP) and then transfers the acetyl group to tRNA to form ac(4)C34. The protein is tRNA(Met) cytidine acetate ligase of Thermotoga maritima (strain ATCC 43589 / DSM 3109 / JCM 10099 / NBRC 100826 / MSB8).